The following is a 414-amino-acid chain: MLITKIFKDYRLFEIFILGIVSGMPLVIIFSTLSVWLKESGIDIAVITTFAVARLSYSLKVFWSPLVDNFKIPFLSRWGHRKSWLILCSSLMVLVLIAMSKENPEVSLTSLYFLTIALGFLSSTFDIAVDALRIDKFDQETQTIASATAVFGYRIGMLITGAGALYLAEITGNNWQLTFVIIAIIFAVATIFIITVNEKELVREKVNITSIISWIYAVINPFKDFFKREFAVTILLAVIFFKLGDAMLGAVASPFYIELGYTKGEIAIIAKLYGLIATLVGGFAGGIVMYKVGNFKGLIITGIAQSLTHFAFIWLNHQPPSFEALLIAITIENFAAAMGATALVGYIGNLCNKKYSATQYALLSSSSSLCNNTVTIYAGKLVNMMGWDGFFIFTIILALPALFILMYLNKKVNV.

A run of 12 helical transmembrane segments spans residues 15 to 35 (IFIL…TLSV), 44 to 63 (IAVI…KVFW), 84 to 104 (WLIL…KENP), 109 to 129 (TSLY…DIAV), 150 to 170 (VFGY…LAEI), 177 to 197 (LTFV…ITVN), 230 to 250 (FAVT…MLGA), 268 to 288 (IIAK…GGIV), 295 to 315 (FKGL…FIWL), 324 to 344 (ALLI…TALV), 360 to 379 (YALL…IYAG), and 389 to 409 (GFFI…MYLN).

It belongs to the major facilitator superfamily.

It localises to the cell inner membrane. This chain is Putative transporter AmpG 4 (ampG4), found in Rickettsia felis (strain ATCC VR-1525 / URRWXCal2) (Rickettsia azadi).